A 2162-amino-acid polypeptide reads, in one-letter code: Calpain-type cysteine protease ADL1 (2162 aa).

The signal sequence occupies residues 1 to 33 (MEEEEHRGVVLVCSICGFLFAVLGPLSFWILWA). Topologically, residues 34 to 70 (VNWRPWRLYSWIYARKWPAYVQGPQLSTLCSFFTLFA) are extracellular. A helical transmembrane segment spans residues 71 to 91 (WLVVVSPITVLLVWGGILIAL). Residues 92 to 95 (LERN) lie on the Cytoplasmic side of the membrane. A helical transmembrane segment spans residues 96-116 (IIGLAVIMVGVALLLSFYSIM). At 117-127 (LWWRTQWQSSK) the chain is on the extracellular side. Residues 128–148 (AVAYLLLLAVGLLCAYEFCAV) traverse the membrane as a helical segment. Residues 149 to 164 (YVTTGASASELNSPSG) are Cytoplasmic-facing. Residues 165–185 (FFFGVSAISLAINMLFISKIL) form a helical membrane-spanning segment. Residues 186–236 (FNGSGFDVDEYVRRLYKFAYSDCVEVAPVSCSPDPPDPSELYMTKSSRVLH) are Extracellular-facing. The chain crosses the membrane as a helical span at residues 237–257 (LGLLYLCSLMVLVVYSILYGL). Over 258 to 264 (TSKEARW) the chain is Cytoplasmic. A helical transmembrane segment spans residues 265–285 (LGALTSVAVVILDWNLGLCSF). Topologically, residues 286 to 294 (RFELLKSRM) are extracellular. The helical transmembrane segment at 295-315 (IALFVAGTSRVFLICFGVHYW) threads the bilayer. Residues 316–320 (YLGHC) lie on the Cytoplasmic side of the membrane. The helical transmembrane segment at 321–341 (ISYAFVASVLLAAAVSCWLSI) threads the bilayer. At 342 to 626 (SNPSVARIDA…LMFHQVAGSP (285 aa)) the chain is on the extracellular side. The disordered stretch occupies residues 366-403 (KGQTSSSNSSDGCGSSVKRSSGSVEAGPHGNATDSMYR). Over residues 370–381 (SSSNSSDGCGSS) the composition is skewed to low complexity. A helical membrane pass occupies residues 627–647 (IRAFVVFTLIFIIETVTVAVH). Residues 648 to 663 (RPKPIKVINATHEQFE) lie on the Cytoplasmic side of the membrane. The chain crosses the membrane as a helical span at residues 664–684 (FGFSILLLSPVVCSIMAFIWS). At 685-697 (LCAEEMTMTSKPR) the chain is on the extracellular side. A helical membrane pass occupies residues 698 to 718 (KYGFIAWLLSTCVGLLLSFLS). The Cytoplasmic portion of the chain corresponds to 719–722 (KSSV). The chain crosses the membrane as a helical span at residues 723-743 (ILGLSLTVPLMVACLSFAIPI). At 744–773 (WMRNGYRFWIPGGELDSRENIRQAPGKKER) the chain is on the extracellular side. The helical transmembrane segment at 774 to 794 (ALFAISITVFTASVIGLGAIV) threads the bilayer. Residues 795 to 825 (SAKPLDALGYKGWDADKKSFYSPYATSMYLG) are Cytoplasmic-facing. The chain crosses the membrane as a helical span at residues 826 to 846 (WALSSTIAVLATGVIPIVAWF). The Extracellular segment spans residues 847–856 (ATYRFSPSSA). The chain crosses the membrane as a helical span at residues 857 to 877 (ICVGLFATVLVSFCGVSYWGV). Residues 878-890 (VNSRQDGVPLKAD) lie on the Cytoplasmic side of the membrane. Residues 891–911 (FLAALLPLLCIPAVFSLFTGM) traverse the membrane as a helical segment. Residues 912–924 (YKWKDDDWKISRG) lie on the Extracellular side of the membrane. Residues 925–945 (VYLFVGMGVLLLLGAISAVIV) traverse the membrane as a helical segment. The Cytoplasmic portion of the chain corresponds to 946–949 (TIRP). A helical membrane pass occupies residues 950-970 (WTVGVACLLVILFLVFAIGVI). The Extracellular portion of the chain corresponds to 971 to 984 (HYWTSNNFYLTRTQ). The chain crosses the membrane as a helical span at residues 985 to 1005 (MLLVCSLAFLLALAAFLMGLF). At 1006–1019 (QEKPFVGASIGYFS) the chain is on the cytoplasmic side. A helical transmembrane segment spans residues 1020–1040 (FLFLLTGRALTVLLSPPIVVY). Topologically, residues 1041–1063 (SPRVLPVYVYDAHADSAKNVSYA) are extracellular. A helical transmembrane segment spans residues 1064-1084 (FLILYGIALATEVWGVIASLI). Residues 1085-2162 (LNPPFIGAAI…TKAPIKLEAV (1078 aa)) are Cytoplasmic-facing. A phosphoserine mark is found at serine 1372 and serine 1377. The Calpain catalytic 1 domain maps to 1418–1611 (TGRHCGEIDL…ICSAEYGLFD (194 aa)). Serine 1668 carries the post-translational modification Phosphoserine. In terms of domain architecture, Calpain catalytic 2 spans 1706–2008 (NFTDQEFPPD…FRSIYVCRVY (303 aa)). Catalysis depends on residues cysteine 1772, histidine 1930, and asparagine 1950.

The protein belongs to the peptidase C2 family. Autocatalytic proteolytic cleavage leading to the production of mainly cytoplasmic localized subproducts of about 85 and 120 kDa. As to expression, ubiquitously expressed with higher levels in embryos, vasculatures, leaf primordia, leaf margins, and shoot apical meristem (SAM).

Its subcellular location is the endoplasmic reticulum membrane. It is found in the cytoplasm. The protein localises to the cell membrane. It localises to the endosome membrane. Functionally, essential protease involved in epiderm development. Required for aleurone cell development in the endosperm probably by maintaining and restricting the aleurone and embryonic epidermal L1 cell-layer fates as well as meristems organization. Involved in the maintenance of adaxial/abaxial axis information in developing leaves, probably by regulating cell proliferation and expansion. Does not need calcium ions to be active. This Oryza sativa subsp. japonica (Rice) protein is Calpain-type cysteine protease ADL1 (ADL1).